The sequence spans 120 residues: Large ribosomal subunit protein P3 (120 aa).

The interval 83 to 120 (GGGGAAASGGAAAEAPKEEKKEEEKEESDDDMGFSLFD) is disordered.

This sequence belongs to the eukaryotic ribosomal protein P1/P2 family. Post-translationally, phosphorylated.

Functionally, plays an important role in the elongation step of protein synthesis. In Zea mays (Maize), this protein is Large ribosomal subunit protein P3 (RPP3A).